A 507-amino-acid chain; its full sequence is Natural resistance-associated macrophage protein 1 (507 aa).

The disordered stretch occupies residues 1–36 (MIRDKNPQRVNRPSYGSISSLPSPAPQPEPSRNTYL). Residues 1–39 (MIRDKNPQRVNRPSYGSISSLPSPAPQPEPSRNTYLSEK) lie on the Cytoplasmic side of the membrane. Over residues 8–22 (QRVNRPSYGSISSLP) the composition is skewed to polar residues. The helical transmembrane segment at 40–60 (IPIPSTEQLLWVLLWATVLGL) threads the bilayer. Residues 61-123 (LCQRLAARLG…ISFNLLSAGR (63 aa)) lie on the Extracellular side of the membrane. A helical membrane pass occupies residues 124 to 144 (IPLWGGVLITIVDTFFFLFLD). The Cytoplasmic segment spans residues 145–152 (NYGLRKLE). A helical transmembrane segment spans residues 153–173 (AFFGFLVTIMALTFGYEYVVA). Residues 174–199 (RPSQGALLKGLFLPSCPGCGQPELLQ) lie on the Extracellular side of the membrane. Residues 200–220 (AVGIVGAIIMPHNIYLHSALV) form a helical membrane-spanning segment. At 221 to 245 (KSREVDRTRRGDVREANMYFLTEAT) the chain is on the cytoplasmic side. A helical transmembrane segment spans residues 246-266 (IALFVSFIINLFVMAVFGQAF). The Extracellular segment spans residues 267–305 (YQQTNEEAFNICANSSLHNYAKIFPRDNNTVSVDIYQGG). N-linked (GlcNAc...) asparagine glycans are attached at residues Asn-280 and Asn-294. A helical membrane pass occupies residues 306 to 326 (VILGCLFGPAALYIWAVGLLA). Residues 327–353 (AGQSSTMTGTYAGQFVMEGFLKLRWSR) lie on the Cytoplasmic side of the membrane. Residues 354–374 (FARVLLTRSCAILPTVLVAVF) form a helical membrane-spanning segment. The Extracellular segment spans residues 375–391 (RDLRDLSGLNDLLNVLQ). The chain crosses the membrane as a helical span at residues 392 to 412 (SLLLPFAVLPILTFTSMPAVM). The Cytoplasmic portion of the chain corresponds to 413–422 (QEFANGWLSK). A helical transmembrane segment spans residues 423–443 (VITSCIMALVCAINLYFVISY). Over 444–451 (LPSLPHPA) the chain is Extracellular. The chain crosses the membrane as a helical span at residues 452 to 472 (YFGLVALLAIGYLGLTAYLAW). At 473 to 507 (TCCIAHGAKFLTHSSHQRFLYGLPIEEQEGREGSG) the chain is on the cytoplasmic side.

This sequence belongs to the NRAMP family.

It is found in the late endosome membrane. It localises to the lysosome membrane. It carries out the reaction Zn(2+)(in) + H(+)(out) = Zn(2+)(out) + H(+)(in). The enzyme catalyses Fe(2+)(in) + H(+)(out) = Fe(2+)(out) + H(+)(in). The catalysed reaction is Mn(2+)(in) + H(+)(out) = Mn(2+)(out) + H(+)(in). Macrophage-specific antiporter that fluxes metal ions in either direction against a proton gradient. Localized to late endosomal lysosomal membranes, delivers bivalent cations from the cytosol into these acidic compartments where they may directly affect antimicrobial activity. Involved in iron metabolism and host natural resistance to infection with intracellular parasites. Pathogen resistance involves sequestration of Fe(2+) and Mn(2+), cofactors of both prokaryotic and eukaryotic catalases and superoxide dismutases, not only to protect the macrophage against its own generation of reactive oxygen species, but to deny the cations to the pathogen for synthesis of its protective enzymes. The protein is Natural resistance-associated macrophage protein 1 (Slc11a1) of Rattus norvegicus (Rat).